The sequence spans 44 residues: Photosystem I reaction center subunit IX (44 aa).

Residues 7–27 (YLSTVPVLTTLWFGSLAGLLI) form a helical membrane-spanning segment.

Belongs to the PsaJ family.

The protein resides in the plastid. It is found in the chloroplast thylakoid membrane. May help in the organization of the PsaE and PsaF subunits. The polypeptide is Photosystem I reaction center subunit IX (Dioscorea elephantipes (Elephant's foot yam)).